The sequence spans 606 residues: Lysosomal cobalamin transporter ABCD4 (606 aa).

In terms of domain architecture, ABC transmembrane type-1 spans 39–332; sequence NALMFLTLLC…CFTQLIDLST (294 aa). Transmembrane regions (helical) follow at residues 43-63, 76-96, 190-210, 279-299, and 314-334; these read FLTL…VGLI, LEGF…NSTL, IFGY…PIVM, YLGS…GVYG, and AFVC…STTL. An ABC transporter domain is found at 389-603; that stretch reads LERVSISAPS…GGGRWELMRI (215 aa). 421–428 provides a ligand contact to ATP; sequence GNTGTGKT.

It belongs to the ABC transporter superfamily. ABCD family. Peroxisomal fatty acyl CoA transporter (TC 3.A.1.203) subfamily. As to quaternary structure, homodimer or heterodimer. Interacts with LMBRD1; this interaction induces the translocation of ABCD4 from the ER to the lysosome membrane. Interacts with LMBRD1 and MMACHC; this interaction ensures the transport of cobalamin from the lysosome to the cytosol. Ubiquitous.

It is found in the endoplasmic reticulum membrane. Its subcellular location is the lysosome membrane. It catalyses the reaction an R-cob(III)alamin(out) + ATP + H2O = an R-cob(III)alamin(in) + ADP + phosphate + H(+). In terms of biological role, lysosomal membrane protein that transports cobalamin (Vitamin B12) from the lysosomal lumen to the cytosol in an ATP-dependent manner. Targeted by LMBRD1 lysosomal chaperone from the endoplasmic reticulum to the lysosomal membrane. Then forms a complex with lysosomal chaperone LMBRD1 and cytosolic MMACHC to transport cobalamin across the lysosomal membrane. The polypeptide is Lysosomal cobalamin transporter ABCD4 (Homo sapiens (Human)).